The chain runs to 281 residues: N-acetyltransferase ECO1 (281 aa).

A CCHH-type zinc finger spans residues 33–57 (VKCDKCEMSYSSTSIEDRAIHEKYH). Residues 86-105 (LSRSTGTITPLNSSPLKKSS) form a disordered region. A compositionally biased stretch (low complexity) spans 95 to 105 (PLNSSPLKKSS). Residue Lys223 is modified to N6-acetyllysine; by autocatalysis.

The protein belongs to the acetyltransferase family. ECO subfamily. As to quaternary structure, binds specifically to CHL12, RFC1, RFC2, RFC3, RFC4, RFC5 and RAD24 when members of an RFC complex. Interacts with CHL1 and MPS3. Post-translationally, autoacetylates in vitro.

Its subcellular location is the nucleus. Functionally, required for establishment of sister chromatid cohesion during S phase but not for its further maintenance during G2 or M phases or for loading the cohesin complex onto DNA. Interacts with the three known alternate replication factor C (RFC) complexes, suggesting that these complexes have essential but redundant activity in cohesion establishment. Acts by acetylating the cohesin complex component SMC3. In vitro, possesses acetyltransferase activity where it can acetylate itself and components of the cohesin complex (MCD1, IRR1 and PDS5), but is unable to acetylate histones. The polypeptide is N-acetyltransferase ECO1 (ECO1) (Saccharomyces cerevisiae (strain ATCC 204508 / S288c) (Baker's yeast)).